A 264-amino-acid chain; its full sequence is 3-methyl-2-oxobutanoate hydroxymethyltransferase (264 aa).

Mg(2+)-binding residues include D45 and D84. Residues 45–46 (DS), D84, and K112 each bind 3-methyl-2-oxobutanoate. Position 114 (E114) interacts with Mg(2+). The Proton acceptor role is filled by E181.

The protein belongs to the PanB family. Homodecamer; pentamer of dimers. It depends on Mg(2+) as a cofactor.

The protein resides in the cytoplasm. The enzyme catalyses 3-methyl-2-oxobutanoate + (6R)-5,10-methylene-5,6,7,8-tetrahydrofolate + H2O = 2-dehydropantoate + (6S)-5,6,7,8-tetrahydrofolate. Its pathway is cofactor biosynthesis; (R)-pantothenate biosynthesis; (R)-pantoate from 3-methyl-2-oxobutanoate: step 1/2. Its function is as follows. Catalyzes the reversible reaction in which hydroxymethyl group from 5,10-methylenetetrahydrofolate is transferred onto alpha-ketoisovalerate to form ketopantoate. This Erwinia tasmaniensis (strain DSM 17950 / CFBP 7177 / CIP 109463 / NCPPB 4357 / Et1/99) protein is 3-methyl-2-oxobutanoate hydroxymethyltransferase.